We begin with the raw amino-acid sequence, 735 residues long: 1,4-alpha-glucan branching enzyme GlgB 1 (735 aa).

The active-site Nucleophile is Asp-418. The active-site Proton donor is the Glu-471.

This sequence belongs to the glycosyl hydrolase 13 family. GlgB subfamily. Monomer.

It catalyses the reaction Transfers a segment of a (1-&gt;4)-alpha-D-glucan chain to a primary hydroxy group in a similar glucan chain.. It functions in the pathway glycan biosynthesis; glycogen biosynthesis. In terms of biological role, catalyzes the formation of the alpha-1,6-glucosidic linkages in glycogen by scission of a 1,4-alpha-linked oligosaccharide from growing alpha-1,4-glucan chains and the subsequent attachment of the oligosaccharide to the alpha-1,6 position. The polypeptide is 1,4-alpha-glucan branching enzyme GlgB 1 (Rhizobium johnstonii (strain DSM 114642 / LMG 32736 / 3841) (Rhizobium leguminosarum bv. viciae)).